We begin with the raw amino-acid sequence, 315 residues long: Malate dehydrogenase (315 aa).

Residues 10–15 (GAGNVG) and Asp34 each bind NAD(+). The substrate site is built by Arg85 and Arg91. NAD(+) is bound by residues Asn98 and 121–123 (VSN). Positions 123 and 154 each coordinate substrate. The active-site Proton acceptor is the His178.

Belongs to the LDH/MDH superfamily. MDH type 3 family.

It catalyses the reaction (S)-malate + NAD(+) = oxaloacetate + NADH + H(+). In terms of biological role, catalyzes the reversible oxidation of malate to oxaloacetate. This Rhodopirellula baltica (strain DSM 10527 / NCIMB 13988 / SH1) protein is Malate dehydrogenase.